Here is a 1810-residue protein sequence, read N- to C-terminus: Transcription initiation factor TFIID subunit 1 (1810 aa).

Residues 1-10 (MGDGERREDE) show a composition bias toward basic and acidic residues. 2 disordered regions span residues 1-38 (MGDG…LGFM) and 413-454 (DPFG…NNIT). A compositionally biased stretch (acidic residues) spans 17 to 27 (ADDDDDEDYDE). 2 stretches are compositionally biased toward polar residues: residues 421 to 434 (PDST…NSYS) and 442 to 454 (QENN…NNIT). One can recognise a Ubiquitin-like domain in the interval 636–712 (MTAIVMTLGG…LHVVRTEIHL (77 aa)). The stretch at 1240-1260 (INEEIQDDVAEAALVEKLLEE) forms a coiled coil. Disordered regions lie at residues 1261 to 1291 (SDSD…MKQG), 1493 to 1609 (SNKI…RAFE), and 1632 to 1692 (ELQK…RHRG). The segment covering 1272–1287 (VETTNYSTPMYNQGNK) has biased composition (polar residues). Residues 1540–1570 (RPTELRSGQEPRKTRKIVELSSFEKRDREDD) show a composition bias toward basic and acidic residues. Over residues 1573-1582 (FSGQPIQINS) the composition is skewed to polar residues. A coiled-coil region spans residues 1627–1647 (ARREDELQKAKKKNKKKKKHE). Over residues 1636 to 1646 (AKKKNKKKKKH) the composition is skewed to basic residues. The segment covering 1647 to 1670 (EFRDDDLLDPRPYKNDRRVPERGR) has biased composition (basic and acidic residues). The 110-residue stretch at 1688-1797 (KRHRGGEVEL…ELCDYLLEES (110 aa)) folds into the Bromo domain.

It belongs to the TAF1 family. TAF1 is the largest component of transcription factor TFIID that is composed of TBP and a variety of TBP-associated factors.

It is found in the nucleus. Functionally, largest component and core scaffold of the TFIID basal transcription factor complex. This chain is Transcription initiation factor TFIID subunit 1 (TAF1), found in Oryza sativa subsp. japonica (Rice).